Reading from the N-terminus, the 203-residue chain is Holliday junction branch migration complex subunit RuvA (203 aa).

The segment at 1–64 (MIGRLRGIII…EDAQLLYGFN (64 aa)) is domain I. Residues 65 to 142 (NKQERTLFKE…KGLHGDLFTP (78 aa)) are domain II. The segment at 143 to 154 (AADLVLTSPASP) is flexible linker. Residues 155–203 (ATDDAEQEAVAALVALGYKPQEASRMVSKIARPDASSETLIREALHAAL) form a domain III region.

Belongs to the RuvA family. As to quaternary structure, homotetramer. Forms an RuvA(8)-RuvB(12)-Holliday junction (HJ) complex. HJ DNA is sandwiched between 2 RuvA tetramers; dsDNA enters through RuvA and exits via RuvB. An RuvB hexamer assembles on each DNA strand where it exits the tetramer. Each RuvB hexamer is contacted by two RuvA subunits (via domain III) on 2 adjacent RuvB subunits; this complex drives branch migration. In the full resolvosome a probable DNA-RuvA(4)-RuvB(12)-RuvC(2) complex forms which resolves the HJ.

It is found in the cytoplasm. The RuvA-RuvB-RuvC complex processes Holliday junction (HJ) DNA during genetic recombination and DNA repair, while the RuvA-RuvB complex plays an important role in the rescue of blocked DNA replication forks via replication fork reversal (RFR). RuvA specifically binds to HJ cruciform DNA, conferring on it an open structure. The RuvB hexamer acts as an ATP-dependent pump, pulling dsDNA into and through the RuvAB complex. HJ branch migration allows RuvC to scan DNA until it finds its consensus sequence, where it cleaves and resolves the cruciform DNA. The protein is Holliday junction branch migration complex subunit RuvA of Escherichia fergusonii (strain ATCC 35469 / DSM 13698 / CCUG 18766 / IAM 14443 / JCM 21226 / LMG 7866 / NBRC 102419 / NCTC 12128 / CDC 0568-73).